A 366-amino-acid polypeptide reads, in one-letter code: tRNA/tmRNA (uracil-C(5))-methyltransferase (366 aa).

S-adenosyl-L-methionine is bound by residues Q189, Y217, N222, E238, and D298. The Nucleophile role is filled by C323. E357 serves as the catalytic Proton acceptor.

The protein belongs to the class I-like SAM-binding methyltransferase superfamily. RNA M5U methyltransferase family. TrmA subfamily.

The catalysed reaction is uridine(54) in tRNA + S-adenosyl-L-methionine = 5-methyluridine(54) in tRNA + S-adenosyl-L-homocysteine + H(+). It carries out the reaction uridine(341) in tmRNA + S-adenosyl-L-methionine = 5-methyluridine(341) in tmRNA + S-adenosyl-L-homocysteine + H(+). In terms of biological role, dual-specificity methyltransferase that catalyzes the formation of 5-methyluridine at position 54 (m5U54) in all tRNAs, and that of position 341 (m5U341) in tmRNA (transfer-mRNA). The polypeptide is tRNA/tmRNA (uracil-C(5))-methyltransferase (Photorhabdus laumondii subsp. laumondii (strain DSM 15139 / CIP 105565 / TT01) (Photorhabdus luminescens subsp. laumondii)).